A 106-amino-acid polypeptide reads, in one-letter code: ATP-dependent Clp protease adapter protein ClpS (106 aa).

This sequence belongs to the ClpS family. As to quaternary structure, binds to the N-terminal domain of the chaperone ClpA.

In terms of biological role, involved in the modulation of the specificity of the ClpAP-mediated ATP-dependent protein degradation. The chain is ATP-dependent Clp protease adapter protein ClpS from Cronobacter sakazakii (strain ATCC BAA-894) (Enterobacter sakazakii).